The primary structure comprises 72 residues: MLGGISIWQLLIVLAILVLIFGTKKLKNLGSDLGGAVKGFKEAVDKDTEAEDGKTAQHKVIDADVKKDDKSA.

Residues 1–21 traverse the membrane as a helical segment; that stretch reads MLGGISIWQLLIVLAILVLIF.

Belongs to the TatA/E family. As to quaternary structure, the Tat system comprises two distinct complexes: a TatABC complex, containing multiple copies of TatA, TatB and TatC subunits, and a separate TatA complex, containing only TatA subunits. Substrates initially bind to the TatABC complex, which probably triggers association of the separate TatA complex to form the active translocon.

It is found in the cell inner membrane. Part of the twin-arginine translocation (Tat) system that transports large folded proteins containing a characteristic twin-arginine motif in their signal peptide across membranes. TatA could form the protein-conducting channel of the Tat system. This is Sec-independent protein translocase protein TatA from Marinomonas sp. (strain MWYL1).